Here is a 396-residue protein sequence, read N- to C-terminus: Tryptophan synthase beta chain (396 aa).

The residue at position 90 (Lys90) is an N6-(pyridoxal phosphate)lysine.

The protein belongs to the TrpB family. In terms of assembly, tetramer of two alpha and two beta chains. Pyridoxal 5'-phosphate is required as a cofactor.

The enzyme catalyses (1S,2R)-1-C-(indol-3-yl)glycerol 3-phosphate + L-serine = D-glyceraldehyde 3-phosphate + L-tryptophan + H2O. The protein operates within amino-acid biosynthesis; L-tryptophan biosynthesis; L-tryptophan from chorismate: step 5/5. Its function is as follows. The beta subunit is responsible for the synthesis of L-tryptophan from indole and L-serine. The sequence is that of Tryptophan synthase beta chain from Clostridium kluyveri (strain NBRC 12016).